The sequence spans 285 residues: HTH-type transcriptional regulator MurR (285 aa).

One can recognise an HTH rpiR-type domain in the interval 1–77 (MLYLTKIRNA…MALIGEYSAS (77 aa)). The H-T-H motif DNA-binding region spans 37–56 (SRKMAKLLGISQSSIVKFAQ). Positions 128–268 (IIEAISKAPF…FVGLVQLNDV (141 aa)) constitute an SIS domain.

As to quaternary structure, homotetramer.

The protein operates within amino-sugar metabolism; N-acetylmuramate degradation [regulation]. Its function is as follows. Represses the expression of the murPQ operon involved in the uptake and degradation of N-acetylmuramic acid (MurNAc). Binds to two adjacent inverted repeats within the operator region. MurNAc 6-phosphate, the substrate of MurQ, is the specific inducer that weakens binding of MurR to the operator. The sequence is that of HTH-type transcriptional regulator MurR from Escherichia coli O17:K52:H18 (strain UMN026 / ExPEC).